The chain runs to 454 residues: Noelin-2 (454 aa).

The N-terminal stretch at M1–G20 is a signal peptide. Coiled coils occupy residues R58–R85 and L136–L193. 6 N-linked (GlcNAc...) asparagine glycosylation sites follow: N74, N155, N275, N310, N399, and N441. Positions G194–H446 constitute an Olfactomedin-like domain. Residues C195 and C377 are joined by a disulfide bond.

As to quaternary structure, peripherally associated with AMPAR complex. AMPAR complex consists of an inner core made of 4 pore-forming GluA/GRIA proteins (GRIA1, GRIA2, GRIA3 and GRIA4) and 4 major auxiliary subunits arranged in a twofold symmetry. One of the two pairs of distinct binding sites is occupied either by CNIH2, CNIH3 or CACNG2, CACNG3. The other harbors CACNG2, CACNG3, CACNG4, CACNG8 or GSG1L. This inner core of AMPAR complex is complemented by outer core constituents binding directly to the GluA/GRIA proteins at sites distinct from the interaction sites of the inner core constituents. Outer core constituents include at least PRRT1, PRRT2, CKAMP44/SHISA9, FRRS1L and NRN1. The proteins of the inner and outer core serve as a platform for other, more peripherally associated AMPAR constituents, including OLFM2. Alone or in combination, these auxiliary subunits control the gating and pharmacology of the AMPAR complex and profoundly impact their biogenesis and protein processing. Interacts with GRIA2. Interacts with OLFM1 and OLFM3. Interacts with SRF; the interaction promotes dissociation of SRF from the transcriptional repressor HEY2. Interacts with RUNX2. N-glycosylated. As to expression, expressed in aortic smooth muscle (at protein level). In the fetus, expressed in the brain and ocular tissues including lens vesicle and optic cup.

The protein resides in the secreted. The protein localises to the synapse. It localises to the membrane. Its subcellular location is the nucleus. It is found in the cytoplasm. In terms of biological role, involved in transforming growth factor beta (TGF-beta)-induced smooth muscle differentiation. TGF-beta induces expression and translocation of OLFM2 to the nucleus where it binds to SRF, causing its dissociation from the transcriptional repressor HEY2/HERP1 and facilitating binding of SRF to target genes. Plays a role in AMPAR complex organization. Is a regulator of vascular smooth-muscle cell (SMC) phenotypic switching, that acts by promoting RUNX2 and inhibiting MYOCD binding to SRF. SMC phenotypic switching is the process through which vascular SMCs undergo transition between a quiescent contractile phenotype and a proliferative synthetic phenotype in response to pathological stimuli. SMC phenotypic plasticity is essential for vascular development and remodeling. In Homo sapiens (Human), this protein is Noelin-2 (OLFM2).